The sequence spans 248 residues: Enolase-phosphatase E1 (248 aa).

Residues D14 and E16 each contribute to the Mg(2+) site. Residues 145–146 and K179 contribute to the substrate site; that span reads SS. D204 lines the Mg(2+) pocket.

Belongs to the HAD-like hydrolase superfamily. MasA/MtnC family. In terms of assembly, monomer. It depends on Mg(2+) as a cofactor.

Its subcellular location is the cytoplasm. It localises to the nucleus. The enzyme catalyses 5-methylsulfanyl-2,3-dioxopentyl phosphate + H2O = 1,2-dihydroxy-5-(methylsulfanyl)pent-1-en-3-one + phosphate. It participates in amino-acid biosynthesis; L-methionine biosynthesis via salvage pathway; L-methionine from S-methyl-5-thio-alpha-D-ribose 1-phosphate: step 3/6. Its pathway is amino-acid biosynthesis; L-methionine biosynthesis via salvage pathway; L-methionine from S-methyl-5-thio-alpha-D-ribose 1-phosphate: step 4/6. Bifunctional enzyme that catalyzes the enolization of 2,3-diketo-5-methylthiopentyl-1-phosphate (DK-MTP-1-P) into the intermediate 2-hydroxy-3-keto-5-methylthiopentenyl-1-phosphate (HK-MTPenyl-1-P), which is then dephosphorylated to form the acireductone 1,2-dihydroxy-3-keto-5-methylthiopentene (DHK-MTPene). In Caenorhabditis elegans, this protein is Enolase-phosphatase E1.